The primary structure comprises 160 residues: Transcription antitermination protein NusB (160 aa).

This sequence belongs to the NusB family.

Involved in transcription antitermination. Required for transcription of ribosomal RNA (rRNA) genes. Binds specifically to the boxA antiterminator sequence of the ribosomal RNA (rrn) operons. This is Transcription antitermination protein NusB from Allorhizobium ampelinum (strain ATCC BAA-846 / DSM 112012 / S4) (Agrobacterium vitis (strain S4)).